The primary structure comprises 104 residues: MHGDTINIQDVILDLVPQPEIDLQCYEQLDYEQFDSSEEDETDNVRNQQARQAEQEACYRIEAECCVCNSIVQLAVLSSRQNVRAVEQLLMGDVSLVCHQCATY.

Residues 1 to 47 (MHGDTINIQDVILDLVPQPEIDLQCYEQLDYEQFDSSEEDETDNVRN) are E7 terminal domain. Residues 23 to 27 (LQCYE) carry the LXCXE motif; interaction with host RB1 and TMEM173/STING motif. A zinc finger lies at 65 to 101 (CCVCNSIVQLAVLSSRQNVRAVEQLLMGDVSLVCHQC). A Nuclear export signal motif is present at residues 83–91 (VRAVEQLLM).

Belongs to the papillomaviridae E7 protein family. Homodimer. Homooligomer. Interacts with host RB1; this interaction induces dissociation of RB1-E2F1 complex thereby disrupting RB1 activity. Interacts with host EP300; this interaction represses EP300 transcriptional activity. Interacts with protein E2; this interaction inhibits E7 oncogenic activity. Interacts with host TMEM173/STING; this interaction impairs the ability of TMEM173/STING to sense cytosolic DNA and promote the production of type I interferon (IFN-alpha and IFN-beta). Post-translationally, highly phosphorylated.

The protein resides in the host cytoplasm. Its subcellular location is the host nucleus. Functionally, plays a role in viral genome replication by driving entry of quiescent cells into the cell cycle. Stimulation of progression from G1 to S phase allows the virus to efficiently use the cellular DNA replicating machinery to achieve viral genome replication. E7 protein has both transforming and trans-activating activities. Induces the disassembly of the E2F1 transcription factor from RB1, with subsequent transcriptional activation of E2F1-regulated S-phase genes. Interferes with host histone deacetylation mediated by HDAC1 and HDAC2, leading to transcription activation. Also plays a role in the inhibition of both antiviral and antiproliferative functions of host interferon alpha. Interaction with host TMEM173/STING impairs the ability of TMEM173/STING to sense cytosolic DNA and promote the production of type I interferon (IFN-alpha and IFN-beta). This is Protein E7 from Homo sapiens (Human).